The following is a 358-amino-acid chain: Methylthioribose-1-phosphate isomerase (358 aa).

Residues 54–56 (RGA), Arg96, and Gln205 each bind substrate. Asp246 functions as the Proton donor in the catalytic mechanism. Position 256–257 (256–257 (NK)) interacts with substrate.

Belongs to the eIF-2B alpha/beta/delta subunits family. MtnA subfamily.

The catalysed reaction is 5-(methylsulfanyl)-alpha-D-ribose 1-phosphate = 5-(methylsulfanyl)-D-ribulose 1-phosphate. The protein operates within amino-acid biosynthesis; L-methionine biosynthesis via salvage pathway; L-methionine from S-methyl-5-thio-alpha-D-ribose 1-phosphate: step 1/6. Functionally, catalyzes the interconversion of methylthioribose-1-phosphate (MTR-1-P) into methylthioribulose-1-phosphate (MTRu-1-P). The polypeptide is Methylthioribose-1-phosphate isomerase (Pseudomonas paraeruginosa (strain DSM 24068 / PA7) (Pseudomonas aeruginosa (strain PA7))).